Consider the following 165-residue polypeptide: Acireductone dioxygenase (165 aa).

4 residues coordinate Fe(2+): His90, His92, Glu96, and His134. Ni(2+) contacts are provided by His90, His92, Glu96, and His134.

It belongs to the acireductone dioxygenase (ARD) family. As to quaternary structure, monomer. Fe(2+) serves as cofactor. It depends on Ni(2+) as a cofactor.

It carries out the reaction 1,2-dihydroxy-5-(methylsulfanyl)pent-1-en-3-one + O2 = 3-(methylsulfanyl)propanoate + CO + formate + 2 H(+). The enzyme catalyses 1,2-dihydroxy-5-(methylsulfanyl)pent-1-en-3-one + O2 = 4-methylsulfanyl-2-oxobutanoate + formate + 2 H(+). It participates in amino-acid biosynthesis; L-methionine biosynthesis via salvage pathway; L-methionine from S-methyl-5-thio-alpha-D-ribose 1-phosphate: step 5/6. Catalyzes 2 different reactions between oxygen and the acireductone 1,2-dihydroxy-3-keto-5-methylthiopentene (DHK-MTPene) depending upon the metal bound in the active site. Fe-containing acireductone dioxygenase (Fe-ARD) produces formate and 2-keto-4-methylthiobutyrate (KMTB), the alpha-ketoacid precursor of methionine in the methionine recycle pathway. Ni-containing acireductone dioxygenase (Ni-ARD) produces methylthiopropionate, carbon monoxide and formate, and does not lie on the methionine recycle pathway. The polypeptide is Acireductone dioxygenase (Rhodopseudomonas palustris (strain ATCC BAA-98 / CGA009)).